A 669-amino-acid polypeptide reads, in one-letter code: Glutaminase kidney isoform, mitochondrial (669 aa).

The transit peptide at 1–54 directs the protein to the mitochondrion; the sequence is MMRLRGSGMLRDLLLRSPAGVSATLRRAQPLVTLCRRPRGGGRPAAGPAAAARL. The interval 68–118 is disordered; sequence LARGLSSSPSEILQELGKGSTHPQPGVSPPAAPAAPGPKDGPGETDAFGNS. Over residues 93–103 the composition is skewed to pro residues; sequence GVSPPAAPAAP. N6-succinyllysine is present on residues Lys-130 and Lys-164. Residue Ser-286 coordinates substrate. Lys-311 carries the N6-acetyllysine modification. The tract at residues 315-322 is highly mobile activation loop; sequence GLRFNKLF. Substrate-binding residues include Asn-335, Glu-381, Asn-388, Tyr-414, Tyr-466, and Val-484. ANK repeat units lie at residues 585–614 and 619–648; these read DSRT…VNPF and WNNT…QYTP. The interval 647-669 is disordered; it reads TPQGDSDNGKENQTVHKNLDGLL. Residue Ser-652 is modified to Phosphoserine. Basic and acidic residues predominate over residues 653-669; sequence DNGKENQTVHKNLDGLL.

The protein belongs to the glutaminase family. As to quaternary structure, homotetramer, dimer of dimers. The tetramers can assemble into rod-like oligomers (in vitro), but the physiological significance of this is not clear. Interacts with RAF1 and MAP2K2. Interacts with ATCAY; the interaction is direct and may control GLS localization, negatively regulating its activity. Synthesized as a 74-kDa cytosolic precursor which is proteolytically processed by the mitochondrial-processing peptidase (MPP) via a 72-kDa intermediate to yield the mature mitochondrial 68- and 65-kDa subunits. In terms of tissue distribution, isoform 1 and isoform 3 are detected in brain cortex. Isoform 3 is highly expressed in astrocytoma, ganglioglioma and ependymoma. Isoform 1 is highly expressed in brain and kidney, but not detected in liver. Isoform 3 is highly expressed in heart and pancreas, detected at lower levels in placenta, lung, pancreas and kidney, but is not detected in liver. Isoform 2 is expressed in cardiac and skeletal muscle.

The protein resides in the mitochondrion. Its subcellular location is the cytoplasm. The protein localises to the cytosol. It localises to the mitochondrion matrix. The enzyme catalyses L-glutamine + H2O = L-glutamate + NH4(+). Isoform 1 and isoform 3 are activated by phosphate. Inhibited by BPTES. BPTES binds between subunits and favors dissociation of the tetramer into dimers. Inhibited by 6-diazo-5-oxo-L-norleucine (DON). Enzyme activity is stimulated by phosphorylation. Functionally, catalyzes the first reaction in the primary pathway for the renal catabolism of glutamine. Plays a role in maintaining acid-base homeostasis. Regulates the levels of the neurotransmitter glutamate, the main excitatory neurotransmitter in the brain. Its function is as follows. Lacks catalytic activity. This is Glutaminase kidney isoform, mitochondrial (GLS) from Homo sapiens (Human).